The following is a 118-amino-acid chain: Small ribosomal subunit protein eS10 (118 aa).

The interval 91 to 118 (RLKNAPAERPRPSRGGPRRGGYRGRARD) is disordered. Over residues 106–118 (GPRRGGYRGRARD) the composition is skewed to basic residues.

This sequence belongs to the eukaryotic ribosomal protein eS10 family. As to quaternary structure, component of the small ribosomal subunit. Mature ribosomes consist of a small (40S) and a large (60S) subunit. The 40S subunit contains about 32 different proteins and 1 molecule of RNA (18S). The 60S subunit contains 45 different proteins and 3 molecules of RNA (25S, 5.8S and 5S).

It is found in the cytoplasm. Functionally, component of the ribosome, a large ribonucleoprotein complex responsible for the synthesis of proteins in the cell. The small ribosomal subunit (SSU) binds messenger RNAs (mRNAs) and translates the encoded message by selecting cognate aminoacyl-transfer RNA (tRNA) molecules. The large subunit (LSU) contains the ribosomal catalytic site termed the peptidyl transferase center (PTC), which catalyzes the formation of peptide bonds, thereby polymerizing the amino acids delivered by tRNAs into a polypeptide chain. The nascent polypeptides leave the ribosome through a tunnel in the LSU and interact with protein factors that function in enzymatic processing, targeting, and the membrane insertion of nascent chains at the exit of the ribosomal tunnel. The sequence is that of Small ribosomal subunit protein eS10 (RPS10) from Candida albicans (strain SC5314 / ATCC MYA-2876) (Yeast).